The following is a 149-amino-acid chain: GATA transcription factor 15 (149 aa).

Over residues 1 to 10 (MLDPTEKVID) the composition is skewed to basic and acidic residues. Disordered regions lie at residues 1–41 (MLDP…NEKK) and 76–102 (RRTL…GDSL). The GATA-type zinc finger occupies 37–91 (SNEKKSCAICGTSKTPLWRGGPAGPKSLCNACGIRNRKKRRTLISNRSEDKKKKS).

Belongs to the type IV zinc-finger family. Class B subfamily.

It localises to the nucleus. Transcriptional regulator that specifically binds 5'-GATA-3' or 5'-GAT-3' motifs within gene promoters. The sequence is that of GATA transcription factor 15 (GATA15) from Arabidopsis thaliana (Mouse-ear cress).